We begin with the raw amino-acid sequence, 661 residues long: Acetyl-coenzyme A synthetase (661 aa).

CoA-binding positions include 197-200 and threonine 320; that span reads RGGK. ATP is bound by residues 396-398, 420-425, aspartate 511, and arginine 526; these read GEP and DTWWQT. Serine 534 lines the CoA pocket. Arginine 537 serves as a coordination point for ATP. Mg(2+) contacts are provided by valine 548 and valine 553. Lysine 620 is modified (N6-acetyllysine).

Belongs to the ATP-dependent AMP-binding enzyme family. Requires Mg(2+) as cofactor. Acetylated. Deacetylation by the SIR2-homolog deacetylase activates the enzyme.

The enzyme catalyses acetate + ATP + CoA = acetyl-CoA + AMP + diphosphate. Catalyzes the conversion of acetate into acetyl-CoA (AcCoA), an essential intermediate at the junction of anabolic and catabolic pathways. AcsA undergoes a two-step reaction. In the first half reaction, AcsA combines acetate with ATP to form acetyl-adenylate (AcAMP) intermediate. In the second half reaction, it can then transfer the acetyl group from AcAMP to the sulfhydryl group of CoA, forming the product AcCoA. This is Acetyl-coenzyme A synthetase from Leptospira interrogans serogroup Icterohaemorrhagiae serovar Lai (strain 56601).